The chain runs to 321 residues: G-protein coupled receptor aex-2 (321 aa).

Topologically, residues 1–24 (MNSTDIIANVTKPFVENLTLGETA) are extracellular. N-linked (GlcNAc...) asparagine glycosylation is found at Asn-2, Asn-9, and Asn-17. Residues 25-45 (FYISCGIVGTVFNALVLWIAL) traverse the membrane as a helical segment. Residues 46–55 (TYINTEDKPR) lie on the Cytoplasmic side of the membrane. A helical transmembrane segment spans residues 56–76 (QIIVINMTVADLLMCIVYMKT). The Extracellular portion of the chain corresponds to 77–90 (RPWLSHFNLWLCHP). Residues Cys-88 and Cys-161 are joined by a disulfide bond. A helical transmembrane segment spans residues 91–111 (YYVIIWTCQMCSCLNLVWLNV). Residues 112 to 132 (DKLIYIQFPLHYYQIVNRKRL) are Cytoplasmic-facing. The chain crosses the membrane as a helical span at residues 133 to 153 (LWITAATWGGLYAMNIALVTF). At 154–175 (LKITRGSCLGVSLNPYVYLLSP) the chain is on the extracellular side. The chain crosses the membrane as a helical span at residues 176–196 (IFYVVMILTSFSLSALIYCIA). Topologically, residues 197–221 (HNLTHMEERQRSKLFRRLFFLFSST) are cytoplasmic. Residues 222–242 (LWTFFTCLPYRLLYLFSIFCG) form a helical membrane-spanning segment. Residues 243–254 (ETCQINNYYKTA) are Extracellular-facing. Residues 255 to 275 (TNLFFRLLIVGIMINPVITIW) form a helical membrane-spanning segment. Residues 276 to 321 (TQRIYRLRLMRMFGRLRENSSTEVLMVSNRRASERPPEHTPLRCDM) are Cytoplasmic-facing.

It belongs to the G-protein coupled receptor 1 family. As to expression, expressed in the intestinal muscle, anal depressor, AVL and DVB GABAergic neurons, enteric muscles, the nerve ring, the ventral nerve cord and head mesodermal cells.

It localises to the cell membrane. Its subcellular location is the cell projection. The protein resides in the cilium. G-protein coupled receptor for the nlp-40 neuropeptide. The activity of this receptor is mediated by G proteins which activate adenylyl cyclase. Plays a role in the defecation motor program, which is a coordinated series of three muscle contractions that occurs every 45 seconds. Specifically, acts in GABAergic neurons, such as AVL and DVB, to control the expulsion step of defecation. Required for fatty acid uptake and metabolism by intestinal cells and therefore regulates the levels of triglycerides in the intestine. This is G-protein coupled receptor aex-2 from Caenorhabditis elegans.